A 345-amino-acid polypeptide reads, in one-letter code: Calcium/calmodulin-dependent protein kinase type 1 (345 aa).

The disordered stretch occupies residues 1-23 (MPLFGSKKETAKKSSKKDKDEGK). Positions 31–287 (YILKDLLGTG…CKQALGHPWI (257 aa)) constitute a Protein kinase domain. ATP-binding positions include 37 to 45 (LGTGAFSQV) and K61. The Proton acceptor role is filled by D153. The segment at 287 to 327 (ISGNAASTENIHSSVSEQLKKNFAKSRWRQAYHATAVIRQM) is autoinhibitory domain. The calmodulin-binding stretch occupies residues 307-328 (KNFAKSRWRQAYHATAVIRQMR).

It belongs to the protein kinase superfamily. CAMK Ser/Thr protein kinase family. CaMK subfamily. In terms of tissue distribution, highly expressed in hepatopancreas and to a lesser extent in gills. Low expression in hemocytes, testis, ovary, heart, eyestalk, muscle and epidermis.

It carries out the reaction L-seryl-[protein] + ATP = O-phospho-L-seryl-[protein] + ADP + H(+). The catalysed reaction is L-threonyl-[protein] + ATP = O-phospho-L-threonyl-[protein] + ADP + H(+). Activated by Ca(2+)/calmodulin. Binding of calmodulin results in conformational change that relieves intrasteric autoinhibition. Calcium/calmodulin-dependent protein kinase that operates in the calcium-triggered CaMKK-CaMK1 signaling cascade and, upon calcium influx, regulates transcription activators activity, cell cycle, hormone production, cell differentiation, actin filament organization and neurite outgrowth. Involved in molting. In Macrobrachium nipponense (Oriental river shrimp), this protein is Calcium/calmodulin-dependent protein kinase type 1.